The sequence spans 104 residues: BLOC-1-related complex subunit 7 (104 aa).

It belongs to the BORCS7 family.

Its subcellular location is the lysosome membrane. Functionally, as part of a BORC-like complex may play a role in lysosomes movement and localization at the cell periphery. Associated with the cytosolic face of lysosomes, this complex may couple lysosomes to microtubule plus-end-directed kinesin motor. The polypeptide is BLOC-1-related complex subunit 7 (Xenopus tropicalis (Western clawed frog)).